Reading from the N-terminus, the 32-residue chain is ilv operon leader peptide (32 aa).

The protein is ilv operon leader peptide (ilvL) of Edwardsiella tarda.